Consider the following 574-residue polypeptide: Isocitrate dehydrogenase kinase/phosphatase (574 aa).

ATP contacts are provided by residues 311–317 and lysine 332; that span reads APGIRGM. The active site involves aspartate 367.

It belongs to the AceK family.

The protein resides in the cytoplasm. The catalysed reaction is L-seryl-[isocitrate dehydrogenase] + ATP = O-phospho-L-seryl-[isocitrate dehydrogenase] + ADP + H(+). Bifunctional enzyme which can phosphorylate or dephosphorylate isocitrate dehydrogenase (IDH) on a specific serine residue. This is a regulatory mechanism which enables bacteria to bypass the Krebs cycle via the glyoxylate shunt in response to the source of carbon. When bacteria are grown on glucose, IDH is fully active and unphosphorylated, but when grown on acetate or ethanol, the activity of IDH declines drastically concomitant with its phosphorylation. The protein is Isocitrate dehydrogenase kinase/phosphatase of Shigella boydii serotype 4 (strain Sb227).